A 346-amino-acid polypeptide reads, in one-letter code: N-acetyl-gamma-glutamyl-phosphate reductase (346 aa).

Cysteine 149 is an active-site residue.

The protein belongs to the NAGSA dehydrogenase family. Type 1 subfamily.

The protein resides in the cytoplasm. The enzyme catalyses N-acetyl-L-glutamate 5-semialdehyde + phosphate + NADP(+) = N-acetyl-L-glutamyl 5-phosphate + NADPH + H(+). It functions in the pathway amino-acid biosynthesis; L-arginine biosynthesis; N(2)-acetyl-L-ornithine from L-glutamate: step 3/4. In terms of biological role, catalyzes the NADPH-dependent reduction of N-acetyl-5-glutamyl phosphate to yield N-acetyl-L-glutamate 5-semialdehyde. The protein is N-acetyl-gamma-glutamyl-phosphate reductase of Geobacter sulfurreducens (strain ATCC 51573 / DSM 12127 / PCA).